Consider the following 817-residue polypeptide: Neurabin-2 (817 aa).

Actin-binding stretches follow at residues 1–154 (MMKT…FERS) and 164–283 (EAAA…QHRV). The tract at residues 1–165 (MMKTEPRGPG…PAAAGGDKEA (165 aa)) is disordered. 2 positions are modified to phosphoserine: S15 and S17. The span at 44–58 (GAHHKKYGSNVHRIK) shows a compositional bias: basic residues. Phosphoserine is present on residues S94, S100, and S116. The tract at residues 100–371 (SLNENVDHSA…PERGVGNGRA (272 aa)) is interaction with D(2) dopamine receptor. Pro residues predominate over residues 131-141 (SAQPAPPPHPP). The segment at 169-255 (RLLRQERAGL…KRSRVFQPPP (87 aa)) is interaction with ADRA2A, ADRA2B and ADRA2C. Phosphoserine is present on S192. T193 bears the Phosphothreonine mark. S205 is subject to Phosphoserine. A Phosphothreonine modification is found at T207. Residues 216–447 (EKADSRTGLH…SEEEDPAPSR (232 aa)) form a disordered region. Positions 252–261 (QPPPPPPPAP) are enriched in pro residues. The span at 291–302 (KPREVRKIKPVE) shows a compositional bias: basic and acidic residues. A compositionally biased stretch (low complexity) spans 333-342 (STVATAASPA). Over residues 344 to 356 (EEPKAQAAPEKEA) the composition is skewed to basic and acidic residues. Acidic residues predominate over residues 410 to 425 (LEEDDEDDEEDGEPPY). The interaction with protein phosphatase 1 stretch occupies residues 417-494 (DEEDGEPPYE…LEKRVERLEL (78 aa)). A Phosphoserine modification is found at S438. The short motif at 447–451 (RKIHF) is the PP1-binding motif element. The interval 480–525 (SAEYELEKRVERLELFPVELEKDSEGLGISIIGMGAGADMGLEKLG) is interaction with RGS2. The region spanning 496 to 584 (PVELEKDSEG…RVRFMIGRER (89 aa)) is the PDZ domain. The tract at residues 595 to 816 (IQQTLEQERW…NLQTLRNSNS (222 aa)) is interaction with TGN38. The residue at position 658 (S658) is a Phosphoserine. Positions 671-788 (FKELQIKHAV…QRRVLEESEL (118 aa)) form a coiled coil.

Interacts with DCLK2. Possibly exists as a homodimer, homotrimer or a homotetramer. Interacts with F-actin, PPP1CA, neurabin-1, TGN38 and D(2) dopamine receptor. Interacts with RGS1, RGS2, RGS4, RGS19 and ADRA1B, ADRA2A, ADRA2B, ADRA2C, CDKN2A, PPP1R2, RASGFR1 and TIAM1. Interacts (via C-terminus) with SPATA13 (via C-terminal tail). Interacts with ADRA2B. Post-translationally, stimulation of D1 (but not D2) dopamine receptors induces Ser-94 phosphorylation. Dephosphorylation of Ser-94 is mediated mainly by PP1 and to a lesser extent by PP2A. Phosphorylation of spinophilin disrupts its association with F-actin, but does not affect its binding to PP1.

The protein resides in the cytoplasm. The protein localises to the cytoskeleton. It is found in the nucleus. Its subcellular location is the cell projection. It localises to the dendritic spine. The protein resides in the postsynaptic density. The protein localises to the synapse. It is found in the cell junction. Its subcellular location is the adherens junction. It localises to the cell membrane. The protein resides in the lamellipodium. The protein localises to the filopodium. It is found in the ruffle membrane. Its function is as follows. Seems to act as a scaffold protein in multiple signaling pathways. Modulates excitatory synaptic transmission and dendritic spine morphology. Binds to actin filaments (F-actin) and shows cross-linking activity. Binds along the sides of the F-actin. May play an important role in linking the actin cytoskeleton to the plasma membrane at the synaptic junction. Believed to target protein phosphatase 1/PP1 to dendritic spines, which are rich in F-actin, and regulates its specificity toward ion channels and other substrates, such as AMPA-type and NMDA-type glutamate receptors. Plays a role in regulation of G-protein coupled receptor signaling, including dopamine D2 receptors and alpha-adrenergic receptors. May establish a signaling complex for dopaminergic neurotransmission through D2 receptors by linking receptors downstream signaling molecules and the actin cytoskeleton. Binds to ADRA1B and RGS2 and mediates regulation of ADRA1B signaling. May confer to Rac signaling specificity by binding to both, RacGEFs and Rac effector proteins. Probably regulates p70 S6 kinase activity by forming a complex with TIAM1. Required for hepatocyte growth factor (HGF)-induced cell migration. This chain is Neurabin-2 (PPP1R9B), found in Homo sapiens (Human).